We begin with the raw amino-acid sequence, 563 residues long: Pentatricopeptide repeat-containing protein At4g39620, chloroplastic (563 aa).

The transit peptide at 1–47 (MDYLLTSPSSLRFSDFISSIPKETDHKWLRFSVNLGDARRSTRTRIT) directs the protein to the chloroplast. PPR repeat units lie at residues 132–166 (DNGVYSKLISVMGKKGQTRMAMWLFSEMKNSGCRP), 167–197 (DASVYNALITAHLHTRDKAKALEKVRGYLDK), 207–241 (NVVTYNILLRAFAQSGKVDQVNALFKDLDMSPVSP), 242–276 (DVYTFNGVMDAYGKNGMIKEMEAVLTRMRSNECKP), 277–311 (DIITFNVLIDSYGKKQEFEKMEQTFKSLMRSKEKP), 312–346 (TLPTFNSMIINYGKARMIDKAEWVFKKMNDMNYIP), 347–381 (SFITYECMIMMYGYCGSVSRAREIFEEVGESDRVL), 382–416 (KASTLNAMLEVYCRNGLYIEADKLFHNASAFRVHP), and 417–451 (DASTYKFLYKAYTKADMKEQVQILMKKMEKDGIVP). 2 disordered regions span residues 468 to 501 (PGSGSENRKSTRSSRSRDSPKGRGGNQLTEFQDK) and 520 to 551 (NLSGHDKGSRDESRKPSQEKQPLFASDQNNMM). A compositionally biased stretch (basic and acidic residues) spans 520–537 (NLSGHDKGSRDESRKPSQ).

The protein belongs to the PPR family. P subfamily.

Its subcellular location is the plastid. The protein localises to the chloroplast. In terms of biological role, essential for embryo development. This Arabidopsis thaliana (Mouse-ear cress) protein is Pentatricopeptide repeat-containing protein At4g39620, chloroplastic.